The primary structure comprises 85 residues: Small ribosomal subunit protein bS16 (85 aa).

It belongs to the bacterial ribosomal protein bS16 family.

The protein is Small ribosomal subunit protein bS16 of Pelobacter propionicus (strain DSM 2379 / NBRC 103807 / OttBd1).